The chain runs to 622 residues: Polyprotein p69 (622 aa).

A Peptidase C7 domain is found at 1–248 (MSCLRKPSQS…AARDPLARIG (248 aa)). Residues Cys-162 and His-215 each act as for papain-like protease p29 activity in the active site.

Post-translationally, autocatalytically processed.

P40 protein is involved in reduction of conidiation of the host. Not necessary for replication. Also involved in reduction of orange pigmentation of the host. Its function is as follows. Cysteine protease of the peptidase family C7 that contributes to hypovirulence-associated traits like the reduction in conidiation and laccase activity, but not to virulence attenuation. Acts as a suppressor of RNA-mediated gene silencing, also known as post-transcriptional gene silencing (PTGS), a mechanism of viral defense that limits the accumulation of viral RNAs. Enhances viral dsRNA accumulation and virus transmission. Also involved in the reduction in orange pigmentation of the host, an effect independent of the intrinsic protease activity. The chain is Polyprotein p69 from Cryphonectria hypovirus 1 (strain Euro7) (CHV-1/Euro7).